Consider the following 269-residue polypeptide: uncharacterized protein (269 aa).

The stretch at 52–262 (KNVYEQLVAT…RKILVESINK (211 aa)) forms a coiled coil.

This is an uncharacterized protein from Caenorhabditis elegans.